A 321-amino-acid chain; its full sequence is Tetraacyldisaccharide 4'-kinase (321 aa).

54-61 (SVGGTGKT) serves as a coordination point for ATP.

This sequence belongs to the LpxK family.

The enzyme catalyses a lipid A disaccharide + ATP = a lipid IVA + ADP + H(+). It functions in the pathway glycolipid biosynthesis; lipid IV(A) biosynthesis; lipid IV(A) from (3R)-3-hydroxytetradecanoyl-[acyl-carrier-protein] and UDP-N-acetyl-alpha-D-glucosamine: step 6/6. Its function is as follows. Transfers the gamma-phosphate of ATP to the 4'-position of a tetraacyldisaccharide 1-phosphate intermediate (termed DS-1-P) to form tetraacyldisaccharide 1,4'-bis-phosphate (lipid IVA). The polypeptide is Tetraacyldisaccharide 4'-kinase (Rickettsia typhi (strain ATCC VR-144 / Wilmington)).